Reading from the N-terminus, the 989-residue chain is Phosphoenolpyruvate carboxylase (989 aa).

Catalysis depends on residues His-175 and Lys-630.

This sequence belongs to the PEPCase type 1 family. It depends on Mg(2+) as a cofactor.

It catalyses the reaction oxaloacetate + phosphate = phosphoenolpyruvate + hydrogencarbonate. Functionally, forms oxaloacetate, a four-carbon dicarboxylic acid source for the tricarboxylic acid cycle. The protein is Phosphoenolpyruvate carboxylase of Prochlorococcus marinus (strain AS9601).